A 300-amino-acid polypeptide reads, in one-letter code: Mycothiol acetyltransferase (300 aa).

N-acetyltransferase domains are found at residues 4–140 and 151–300; these read IDWR…RPLT and VRLA…AVAD. Residue Asp-36 participates in 1D-myo-inositol 2-(L-cysteinylamino)-2-deoxy-alpha-D-glucopyranoside binding. 79–81 serves as a coordination point for acetyl-CoA; it reads LVV. Glu-178, Lys-219, and Glu-227 together coordinate 1D-myo-inositol 2-(L-cysteinylamino)-2-deoxy-alpha-D-glucopyranoside. 231–233 lines the acetyl-CoA pocket; that stretch reads VGV. Tyr-269 is a 1D-myo-inositol 2-(L-cysteinylamino)-2-deoxy-alpha-D-glucopyranoside binding site. Position 274–279 (274–279) interacts with acetyl-CoA; the sequence is NGAAVK.

Belongs to the acetyltransferase family. MshD subfamily. Monomer.

It carries out the reaction 1D-myo-inositol 2-(L-cysteinylamino)-2-deoxy-alpha-D-glucopyranoside + acetyl-CoA = mycothiol + CoA + H(+). In terms of biological role, catalyzes the transfer of acetyl from acetyl-CoA to desacetylmycothiol (Cys-GlcN-Ins) to form mycothiol. This Mycobacterium sp. (strain MCS) protein is Mycothiol acetyltransferase.